We begin with the raw amino-acid sequence, 137 residues long: NADPH-dependent 7-cyano-7-deazaguanine reductase (137 aa).

Residue Cys45 is the Thioimide intermediate of the active site. Asp52 functions as the Proton donor in the catalytic mechanism. Residues 68 to 70 and 87 to 88 each bind substrate; these read VEL and QE.

Belongs to the GTP cyclohydrolase I family. QueF type 1 subfamily.

Its subcellular location is the cytoplasm. The enzyme catalyses 7-aminomethyl-7-carbaguanine + 2 NADP(+) = 7-cyano-7-deazaguanine + 2 NADPH + 3 H(+). It functions in the pathway tRNA modification; tRNA-queuosine biosynthesis. Its function is as follows. Catalyzes the NADPH-dependent reduction of 7-cyano-7-deazaguanine (preQ0) to 7-aminomethyl-7-deazaguanine (preQ1). The polypeptide is NADPH-dependent 7-cyano-7-deazaguanine reductase (Thermotoga petrophila (strain ATCC BAA-488 / DSM 13995 / JCM 10881 / RKU-1)).